Reading from the N-terminus, the 439-residue chain is D-inositol 3-phosphate glycosyltransferase (439 aa).

Histidine 21 lines the 1D-myo-inositol 3-phosphate pocket. UDP-N-acetyl-alpha-D-glucosamine-binding positions include 27-28 and glycine 35; that span reads QP. Residues 32-37, lysine 90, tyrosine 123, threonine 147, and arginine 167 contribute to the 1D-myo-inositol 3-phosphate site; that span reads DAGGMN. UDP-N-acetyl-alpha-D-glucosamine-binding residues include arginine 241, lysine 246, and glutamine 299. Residues tyrosine 308, arginine 309, and alanine 311 each contribute to the Mg(2+) site. UDP-N-acetyl-alpha-D-glucosamine contacts are provided by glutamate 321 and glutamate 329. Threonine 335 serves as a coordination point for Mg(2+).

It belongs to the glycosyltransferase group 1 family. MshA subfamily. Homodimer.

It catalyses the reaction 1D-myo-inositol 3-phosphate + UDP-N-acetyl-alpha-D-glucosamine = 1D-myo-inositol 2-acetamido-2-deoxy-alpha-D-glucopyranoside 3-phosphate + UDP + H(+). In terms of biological role, catalyzes the transfer of a N-acetyl-glucosamine moiety to 1D-myo-inositol 3-phosphate to produce 1D-myo-inositol 2-acetamido-2-deoxy-glucopyranoside 3-phosphate in the mycothiol biosynthesis pathway. The polypeptide is D-inositol 3-phosphate glycosyltransferase (Mycobacterium sp. (strain JLS)).